A 292-amino-acid chain; its full sequence is Small ribosomal subunit biogenesis GTPase RsgA (292 aa).

Residues 62 to 213 enclose the CP-type G domain; sequence KNSLVRPPIV…IADTPGFSSL (152 aa). GTP contacts are provided by residues 111 to 114 and 156 to 164; these read SKMD and GQTGVGKST. Positions 237, 242, 244, and 250 each coordinate Zn(2+).

The protein belongs to the TRAFAC class YlqF/YawG GTPase family. RsgA subfamily. As to quaternary structure, monomer. Associates with 30S ribosomal subunit, binds 16S rRNA. It depends on Zn(2+) as a cofactor.

The protein localises to the cytoplasm. Its function is as follows. One of several proteins that assist in the late maturation steps of the functional core of the 30S ribosomal subunit. Helps release RbfA from mature subunits. May play a role in the assembly of ribosomal proteins into the subunit. Circularly permuted GTPase that catalyzes slow GTP hydrolysis, GTPase activity is stimulated by the 30S ribosomal subunit. The sequence is that of Small ribosomal subunit biogenesis GTPase RsgA from Streptococcus pneumoniae serotype 4 (strain ATCC BAA-334 / TIGR4).